A 1098-amino-acid chain; its full sequence is Bifunctional helicase and thymine dioxygenase JBP2 (1098 aa).

The thymine dioxygenase stretch occupies residues 1–540 (MLNGLTRVST…PPLFVPTRLA (540 aa)). Positions 415, 417, and 465 each coordinate Fe cation. A 2-oxoglutarate-binding site is contributed by Arg-479. Residues 541 to 1098 (SHLAPVQLAA…RYQESVRESE (558 aa)) are DNA Helicase. Positions 555-730 (VERTEKQSGC…YRLVGWVNKG (176 aa)) constitute a Helicase ATP-binding domain. ATP is bound at residue 568–575 (MTMGLGKT). Residues 681–684 (DEGH) carry the DEAH box motif. The 161-residue stretch at 897–1057 (VLVDIVLRVQ…ALPDELEDCA (161 aa)) folds into the Helicase C-terminal domain.

It in the C-terminal section; belongs to the SNF2/RAD54 helicase family. The protein in the N-terminal section; belongs to the TET family. JBP2 subfamily. Fe(2+) is required as a cofactor.

The protein localises to the nucleus. It carries out the reaction ATP + H2O = ADP + phosphate + H(+). It catalyses the reaction thymine + 2-oxoglutarate + O2 = 5-hydroxymethyluracil + succinate + CO2. Its function is as follows. Dioxygenase that catalyzes the first step of DNA base J (beta-d-glucosyl-HOMedU) biosynthesis by converting thymine to 5-hydroxymethyluracil (HOMedU). DNA base J is a hypermodified thymidine residue found in the genome of kinetoplastid parasites, which is localized primarily to repetitive DNA, namely the telomeres, and is implicated in the regulation of antigenic variation. Probably also acts as a DNA helicase. Recognizes and binds specific regions of the genome, hydrolyzes ATP and allows the DNA base J de novo synthesis. Involved in initial synthesis of DNA base J, JBP1 being able to act via the basal level of DNA base J and propagate further synthesis. In contrast to JBP1, it does not specifically bind DNA base J, however it binds chromatin. The chain is Bifunctional helicase and thymine dioxygenase JBP2 (JBP2) from Leishmania infantum.